A 50-amino-acid chain; its full sequence is Thrombin-like enzyme BpirSP27 (50 aa).

A Peptidase S1 domain is found at 1-50; the sequence is VVGGDECNINEHRSLVAIFNSTGFFCSGILLNQEWVLTASHCDSTNFQMK. Asn20 carries N-linked (GlcNAc...) asparagine glycosylation. Cys26 and Cys42 are joined by a disulfide. Residue His41 is the Charge relay system of the active site.

Belongs to the peptidase S1 family. Snake venom subfamily. Monomer. N-glycosylated. As to expression, expressed by the venom gland.

Its subcellular location is the secreted. With respect to regulation, inhibited by serine protease inhibitors PMSF, benzamidine, leupeptin and aprotinin, as well as by copper (Cu2+) and manganese (Mn2+) ions. Not inhibited by metalloprotease inhibitors EDTA, EGTA and 1,10-phenanthroline, as well as by barium (Ba2+) and calcium ion (Ca2+). Functionally, snake venom serine protease that interferes with the hemostatic system of the prey. It preferentially degrades the Bbeta chain (FGB) of fibrinogen, with minor effects on the Aalpha chain (FGA). It presents a lower ability to degrade fibrin clots than BpirSP41. It hydrolyzes chromogenic substrates S-2238 (used for testing thrombin activity), S-2222 (factor Xa), S-2266 (glandular kallikrein and factor XIa), S-2302 (plasma kallikrein, factor XIa and XIIa), and S-2251 (plasmin). It shows a decrease in the clotting time of human plasma in the presence of increasing doses of the enzyme. Its minimum coagulant dose (MCD) is 3.5 ug. It also promotes platelet aggregation in a concentration-dependent manner in the presence or absence of calcium. It also shows 20% inhibition of the hemolytic activity promoted by the complement pathways and possess only a minor role in the induction of edema and pain in rat. This Bothrops pirajai (Piraja's lancehead) protein is Thrombin-like enzyme BpirSP27.